A 421-amino-acid polypeptide reads, in one-letter code: 5-methylthioadenosine/S-adenosylhomocysteine deaminase (421 aa).

2 residues coordinate Zn(2+): His60 and His62. Positions 89 and 181 each coordinate substrate. His208 serves as a coordination point for Zn(2+). Residues Glu211 and Asp296 each coordinate substrate. Asp296 provides a ligand contact to Zn(2+).

It belongs to the metallo-dependent hydrolases superfamily. MTA/SAH deaminase family. Zn(2+) is required as a cofactor.

It carries out the reaction S-adenosyl-L-homocysteine + H2O + H(+) = S-inosyl-L-homocysteine + NH4(+). It catalyses the reaction S-methyl-5'-thioadenosine + H2O + H(+) = S-methyl-5'-thioinosine + NH4(+). Catalyzes the deamination of 5-methylthioadenosine and S-adenosyl-L-homocysteine into 5-methylthioinosine and S-inosyl-L-homocysteine, respectively. Is also able to deaminate adenosine. The sequence is that of 5-methylthioadenosine/S-adenosylhomocysteine deaminase from Pyrococcus horikoshii (strain ATCC 700860 / DSM 12428 / JCM 9974 / NBRC 100139 / OT-3).